The chain runs to 496 residues: Probable cytosol aminopeptidase (496 aa).

Residues Lys-251 and Asp-256 each coordinate Mn(2+). The active site involves Lys-263. The Mn(2+) site is built by Asp-274, Asp-333, and Glu-335. The active site involves Arg-337.

This sequence belongs to the peptidase M17 family. It depends on Mn(2+) as a cofactor.

The protein resides in the cytoplasm. The catalysed reaction is Release of an N-terminal amino acid, Xaa-|-Yaa-, in which Xaa is preferably Leu, but may be other amino acids including Pro although not Arg or Lys, and Yaa may be Pro. Amino acid amides and methyl esters are also readily hydrolyzed, but rates on arylamides are exceedingly low.. The enzyme catalyses Release of an N-terminal amino acid, preferentially leucine, but not glutamic or aspartic acids.. In terms of biological role, presumably involved in the processing and regular turnover of intracellular proteins. Catalyzes the removal of unsubstituted N-terminal amino acids from various peptides. The polypeptide is Probable cytosol aminopeptidase (Acidovorax sp. (strain JS42)).